The primary structure comprises 146 residues: Protein SprT-like (146 aa).

Positions 6–141 (YVKTVSIEDF…GCGLCQGKLI (136 aa)) constitute a SprT-like domain. H64 contacts Zn(2+). The active site involves E65. Zn(2+) is bound at residue H68.

It belongs to the SprT family. The cofactor is Zn(2+).

It is found in the cytoplasm. This is Protein SprT-like from Streptococcus thermophilus (strain CNRZ 1066).